The primary structure comprises 659 residues: MIQIGKIFAGRYRIVKQIGRGGMADVYLAKDLILDGEEVAVKVLRTNYQTDPIAVARFQREARAMADLDHPHIVRITDIGEEDGQQYLAMEYVAGLDLKRYIKEHYPLSNEEAVRIMGQILLAMRLAHTRGIVHRDLKPQNILLTPDGTAKVTDFGIAVAFAETSLTQTNSMLGSVHYLSPEQARGSKATVQSDIYAMGIIFYEMLTGHIPYDGDSAVTIALQHFQNPLPSVIAENSSVPQALENVIIKATAKKLTNRYRSVSEMYVDLSSSLSYNRRNESKLIFDETSKADTKTLPKVSQSTLTSIPKVQAQTEHKSIKNPSQAVTEETYQPQAPKKHRFKMRYLILLASLVLVAASLIWILSRTPATIAIPDVAGQTVAEAKATLKKANFEIGEEKTEASEKVEEGRIIRTDPGAGTGRKEGTKINLVVSSGKQSFQISNYVGRKSSDVIAELKEKKVPDNLIKIEEEESNESEAGTVLKQSLPEGTTYDLSKATQIVLTVAKKATTIQLGNYIGRNSTEVISELKQKKVPENLIKIEEEESSESEPGTIMKQSPGAGTTYDVSKPTQIVLTVAKKVTSVAMPSYIGSSLEFTKNNLIQIVGIKEANIEVVEVTTAPAGSVEGMVVEQSPRAGEKVDLNKTRVKISIYKPKTTSATP.

Residues 1–342 (MIQIGKIFAG…PQAPKKHRFK (342 aa)) are Cytoplasmic-facing. Positions 12-273 (YRIVKQIGRG…EMYVDLSSSL (262 aa)) constitute a Protein kinase domain. Residues 18–26 (IGRGGMADV) and lysine 42 contribute to the ATP site. The active-site Proton acceptor is aspartate 136. Residues 343-363 (MRYLILLASLVLVAASLIWIL) form a helical membrane-spanning segment. The Extracellular portion of the chain corresponds to 364–659 (SRTPATIAIP…YKPKTTSATP (296 aa)). PASTA domains lie at 366–433 (TPAT…VVSS), 434–505 (GKQS…TVAK), 506–577 (KATT…TVAK), and 578–651 (KVTS…SIYK). The tract at residues 541-561 (EEESSESEPGTIMKQSPGAGT) is disordered.

The protein belongs to the protein kinase superfamily. Ser/Thr protein kinase family. As to quaternary structure, homodimer. StkP forms dimers through its transmembrane and extracellular domains. Dimer formation likely promotes autophosphorylation activity and might be necessary for targeting StkP substrate. Post-translationally, autophosphorylation occurs predominantly at the threonine residue and weakly at the serine residue. Dephosphorylated by PhpP.

It localises to the cell membrane. It carries out the reaction L-seryl-[protein] + ATP = O-phospho-L-seryl-[protein] + ADP + H(+). The catalysed reaction is L-threonyl-[protein] + ATP = O-phospho-L-threonyl-[protein] + ADP + H(+). Functionally, protein kinase involved in signal transduction pathways that regulate various cellular processes. Likely senses intracellular peptidoglycan subunits present in the cell division septa of actively growing cells; thus, intracellular unlinked peptidoglycan may serve as the signal molecules that trigger StkP phosphorylation activity on a set of substrates. Plays a crucial role in the regulation of cell shape and cell division of S.pneumoniae through control of at least DivIVA activity. Is involved in competence triggering, and is required for the expression of the central competence operon comCDE. StkP also plays an important role for bacterial survival in vivo. Identified target substrates that are specifically phosphorylated by StkP in vivo, mainly on threonine residues, are DivIVA, GlmM, PpaC, MapZ, KhpB (also called EloR/Jag, shown in strains R6 and Rx1) and StkP itself. Autophosphorylated StkP is a substrate for the cotranscribed protein phosphatase PhpP (shown in the avirulent strain Rx / Cp1015); PhpP and StkP appear to constitute a functional signaling couple in vivo. The protein is Serine/threonine-protein kinase StkP (stkP) of Streptococcus pneumoniae serotype 2 (strain D39 / NCTC 7466).